The following is a 267-amino-acid chain: 5'-methylthioadenosine nucleosidase (267 aa).

Glu-38 serves as the catalytic Proton acceptor. S-methyl-5'-thioadenosine is bound by residues Thr-116, 199–202, and Asp-225; that span reads KDME. Adenine-binding residues include Lys-199 and Asp-225. Catalysis depends on Asp-225, which acts as the Proton donor.

It belongs to the PNP/UDP phosphorylase family. MtnN subfamily. In terms of assembly, homodimer. Interacts with CBL3 in a calcium-dependent manner. Expressed in roots, leaves, stems, cauline leaves and flowers.

It carries out the reaction S-methyl-5'-thioadenosine + H2O = 5-(methylsulfanyl)-D-ribose + adenine. Its pathway is amino-acid biosynthesis; L-methionine biosynthesis via salvage pathway; S-methyl-5-thio-alpha-D-ribose 1-phosphate from S-methyl-5'-thioadenosine (hydrolase route): step 1/2. Its activity is regulated as follows. Inhibited by CBL3 in a calcium-dependent manner. Inhibited by 5'-methylthiotubercidin (MTT) and by formycin A (FMA). In terms of biological role, enzyme of the methionine cycle that catalyzes the irreversible cleavage of the glycosidic bond in 5'-methylthioadenosine (MTA) to adenine and 5'-methylthioribose. Contributes to the maintenance of AdoMet homeostasis and is required to sustain high rates of ethylene synthesis. Inactive towards S-adenosylhomocysteine (SAH/AdoHcy). The protein is 5'-methylthioadenosine nucleosidase (MTN1) of Arabidopsis thaliana (Mouse-ear cress).